A 274-amino-acid polypeptide reads, in one-letter code: 4-hydroxy-3-methylbut-2-enyl diphosphate reductase (274 aa).

Cys-12 is a binding site for [4Fe-4S] cluster. (2E)-4-hydroxy-3-methylbut-2-enyl diphosphate-binding residues include His-36 and His-70. Dimethylallyl diphosphate contacts are provided by His-36 and His-70. 2 residues coordinate isopentenyl diphosphate: His-36 and His-70. Cys-92 contacts [4Fe-4S] cluster. Residue His-120 participates in (2E)-4-hydroxy-3-methylbut-2-enyl diphosphate binding. Residue His-120 coordinates dimethylallyl diphosphate. His-120 is an isopentenyl diphosphate binding site. The active-site Proton donor is the Glu-122. Thr-158 contacts (2E)-4-hydroxy-3-methylbut-2-enyl diphosphate. Cys-186 lines the [4Fe-4S] cluster pocket. Positions 214, 215, 216, and 258 each coordinate (2E)-4-hydroxy-3-methylbut-2-enyl diphosphate. Dimethylallyl diphosphate-binding residues include Ser-214, Ser-215, Asn-216, and Ser-258. Isopentenyl diphosphate is bound by residues Ser-214, Ser-215, Asn-216, and Ser-258.

Belongs to the IspH family. The cofactor is [4Fe-4S] cluster.

It carries out the reaction isopentenyl diphosphate + 2 oxidized [2Fe-2S]-[ferredoxin] + H2O = (2E)-4-hydroxy-3-methylbut-2-enyl diphosphate + 2 reduced [2Fe-2S]-[ferredoxin] + 2 H(+). The enzyme catalyses dimethylallyl diphosphate + 2 oxidized [2Fe-2S]-[ferredoxin] + H2O = (2E)-4-hydroxy-3-methylbut-2-enyl diphosphate + 2 reduced [2Fe-2S]-[ferredoxin] + 2 H(+). Its pathway is isoprenoid biosynthesis; dimethylallyl diphosphate biosynthesis; dimethylallyl diphosphate from (2E)-4-hydroxy-3-methylbutenyl diphosphate: step 1/1. It participates in isoprenoid biosynthesis; isopentenyl diphosphate biosynthesis via DXP pathway; isopentenyl diphosphate from 1-deoxy-D-xylulose 5-phosphate: step 6/6. In terms of biological role, catalyzes the conversion of 1-hydroxy-2-methyl-2-(E)-butenyl 4-diphosphate (HMBPP) into a mixture of isopentenyl diphosphate (IPP) and dimethylallyl diphosphate (DMAPP). Acts in the terminal step of the DOXP/MEP pathway for isoprenoid precursor biosynthesis. This chain is 4-hydroxy-3-methylbut-2-enyl diphosphate reductase, found in Helicobacter pylori (strain Shi470).